We begin with the raw amino-acid sequence, 316 residues long: 4-hydroxy-3-methylbut-2-enyl diphosphate reductase (316 aa).

Cys-12 provides a ligand contact to [4Fe-4S] cluster. Residues His-41 and His-74 each contribute to the (2E)-4-hydroxy-3-methylbut-2-enyl diphosphate site. Dimethylallyl diphosphate contacts are provided by His-41 and His-74. Residues His-41 and His-74 each coordinate isopentenyl diphosphate. Cys-96 is a binding site for [4Fe-4S] cluster. His-124 is a binding site for (2E)-4-hydroxy-3-methylbut-2-enyl diphosphate. A dimethylallyl diphosphate-binding site is contributed by His-124. His-124 lines the isopentenyl diphosphate pocket. Glu-126 acts as the Proton donor in catalysis. Thr-169 serves as a coordination point for (2E)-4-hydroxy-3-methylbut-2-enyl diphosphate. Cys-199 provides a ligand contact to [4Fe-4S] cluster. Ser-227, Ser-228, Asn-229, and Ser-271 together coordinate (2E)-4-hydroxy-3-methylbut-2-enyl diphosphate. The dimethylallyl diphosphate site is built by Ser-227, Ser-228, Asn-229, and Ser-271. The isopentenyl diphosphate site is built by Ser-227, Ser-228, Asn-229, and Ser-271.

Belongs to the IspH family. It depends on [4Fe-4S] cluster as a cofactor.

The enzyme catalyses isopentenyl diphosphate + 2 oxidized [2Fe-2S]-[ferredoxin] + H2O = (2E)-4-hydroxy-3-methylbut-2-enyl diphosphate + 2 reduced [2Fe-2S]-[ferredoxin] + 2 H(+). The catalysed reaction is dimethylallyl diphosphate + 2 oxidized [2Fe-2S]-[ferredoxin] + H2O = (2E)-4-hydroxy-3-methylbut-2-enyl diphosphate + 2 reduced [2Fe-2S]-[ferredoxin] + 2 H(+). It functions in the pathway isoprenoid biosynthesis; dimethylallyl diphosphate biosynthesis; dimethylallyl diphosphate from (2E)-4-hydroxy-3-methylbutenyl diphosphate: step 1/1. The protein operates within isoprenoid biosynthesis; isopentenyl diphosphate biosynthesis via DXP pathway; isopentenyl diphosphate from 1-deoxy-D-xylulose 5-phosphate: step 6/6. Its function is as follows. Catalyzes the conversion of 1-hydroxy-2-methyl-2-(E)-butenyl 4-diphosphate (HMBPP) into a mixture of isopentenyl diphosphate (IPP) and dimethylallyl diphosphate (DMAPP). Acts in the terminal step of the DOXP/MEP pathway for isoprenoid precursor biosynthesis. The polypeptide is 4-hydroxy-3-methylbut-2-enyl diphosphate reductase (Stenotrophomonas maltophilia (strain K279a)).